The sequence spans 430 residues: Dihydroorotase (430 aa).

Zn(2+) is bound by residues His-60 and His-62. Substrate contacts are provided by residues 62 to 64 (HLR) and Asn-94. Zn(2+) contacts are provided by Asp-152, His-179, His-232, and Asp-305. Residue Asp-305 is part of the active site. Substrate-binding positions include His-309 and 323–324 (FG).

Belongs to the metallo-dependent hydrolases superfamily. DHOase family. Class I DHOase subfamily. Zn(2+) is required as a cofactor.

It carries out the reaction (S)-dihydroorotate + H2O = N-carbamoyl-L-aspartate + H(+). It functions in the pathway pyrimidine metabolism; UMP biosynthesis via de novo pathway; (S)-dihydroorotate from bicarbonate: step 3/3. Its function is as follows. Catalyzes the reversible cyclization of carbamoyl aspartate to dihydroorotate. The protein is Dihydroorotase of Solibacter usitatus (strain Ellin6076).